Here is an 84-residue protein sequence, read N- to C-terminus: Anaphase-promoting complex subunit 11 (84 aa).

Cys23, Cys26, Cys34, Cys37, Cys44, Cys51, His53, His56, His58, Cys59, Cys73, and Cys76 together coordinate Zn(2+). The RING-type zinc-finger motif lies at 34–77 (CPDCKVPGDDCPLVWGQCSHCFHMHCILKWLNAQQVQQHCPMCR).

Belongs to the RING-box family. In terms of assembly, the mammalian APC/C is composed at least of 14 distinct subunits ANAPC1, ANAPC2, CDC27/APC3, ANAPC4, ANAPC5, CDC16/APC6, ANAPC7, CDC23/APC8, ANAPC10, ANAPC11, CDC26/APC12, ANAPC13, ANAPC15 and ANAPC16 that assemble into a complex of at least 19 chains with a combined molecular mass of around 1.2 MDa; APC/C interacts with FZR1 and FBXO5. Interacts with the cullin domain of ANAPC2. Interacts with UBE2D2. Post-translationally, auto-ubiquitinated.

Its subcellular location is the cytoplasm. It localises to the nucleus. Its pathway is protein modification; protein ubiquitination. Together with the cullin protein ANAPC2, constitutes the catalytic component of the anaphase promoting complex/cyclosome (APC/C), a cell cycle-regulated E3 ubiquitin ligase that controls progression through mitosis and the G1 phase of the cell cycle. The APC/C complex acts by mediating ubiquitination and subsequent degradation of target proteins: it mainly mediates the formation of 'Lys-11'-linked polyubiquitin chains and, to a lower extent, the formation of 'Lys-48'- and 'Lys-63'-linked polyubiquitin chains. The APC/C complex catalyzes assembly of branched 'Lys-11'-/'Lys-48'-linked branched ubiquitin chains on target proteins. May recruit the E2 ubiquitin-conjugating enzymes to the complex. This Mus musculus (Mouse) protein is Anaphase-promoting complex subunit 11 (Anapc11).